Reading from the N-terminus, the 475-residue chain is 1-aminocyclopropane-1-carboxylate synthase CMA101 (475 aa).

Lysine 272 bears the N6-(pyridoxal phosphate)lysine mark.

The protein belongs to the class-I pyridoxal-phosphate-dependent aminotransferase family. Homodimer. Requires pyridoxal 5'-phosphate as cofactor.

The catalysed reaction is S-adenosyl-L-methionine = 1-aminocyclopropane-1-carboxylate + S-methyl-5'-thioadenosine + H(+). It functions in the pathway alkene biosynthesis; ethylene biosynthesis via S-adenosyl-L-methionine; ethylene from S-adenosyl-L-methionine: step 1/2. Functionally, catalyzes the formation of 1-aminocyclopropane-1-carboxylate, a direct precursor of ethylene in higher plants. The polypeptide is 1-aminocyclopropane-1-carboxylate synthase CMA101 (ACS2) (Cucurbita maxima (Pumpkin)).